A 215-amino-acid polypeptide reads, in one-letter code: MMKLLLIAAAAFVAVSADPIHYDKITEEINKAVDEAVAAIEKSETFDPMKVPDHSDKFERHIGIIDLKGELDMRNIQVRGLKQMKRVGDANVKSEDGVVKAHLLVGVHDDVVSMEYDLAYKLGDLHPNTHVISDIQDFVVELSLEVSEEGNMTLTSFEVRQFANVVNHIGGLSILDPIFAVLSDVLTAIFQDTVRAEMTKVLAPAFKKELERNNQ.

A signal peptide spans 1-17 (MMKLLLIAAAAFVAVSA). An N-linked (GlcNAc...) asparagine glycan is attached at Asn151.

The protein belongs to the mite group 7 allergen family.

The protein localises to the secreted. The chain is Mite allergen Der p 7 (DERP7) from Dermatophagoides pteronyssinus (European house dust mite).